We begin with the raw amino-acid sequence, 363 residues long: Succinyl-diaminopimelate desuccinylase (363 aa).

His63 contacts Zn(2+). Residue Asp65 is part of the active site. Asp94 contributes to the Zn(2+) binding site. Glu123 functions as the Proton acceptor in the catalytic mechanism. Zn(2+)-binding residues include Glu124, Glu152, and His337.

Belongs to the peptidase M20A family. DapE subfamily. In terms of assembly, homodimer. The cofactor is Zn(2+). It depends on Co(2+) as a cofactor.

It catalyses the reaction N-succinyl-(2S,6S)-2,6-diaminopimelate + H2O = (2S,6S)-2,6-diaminopimelate + succinate. It participates in amino-acid biosynthesis; L-lysine biosynthesis via DAP pathway; LL-2,6-diaminopimelate from (S)-tetrahydrodipicolinate (succinylase route): step 3/3. In terms of biological role, catalyzes the hydrolysis of N-succinyl-L,L-diaminopimelic acid (SDAP), forming succinate and LL-2,6-diaminopimelate (DAP), an intermediate involved in the bacterial biosynthesis of lysine and meso-diaminopimelic acid, an essential component of bacterial cell walls. The protein is Succinyl-diaminopimelate desuccinylase of Campylobacter concisus (strain 13826).